A 640-amino-acid chain; its full sequence is 1-deoxy-D-xylulose-5-phosphate synthase (640 aa).

Thiamine diphosphate-binding positions include His72 and 113-115; that span reads GHA. Position 144 (Asp144) interacts with Mg(2+). Thiamine diphosphate is bound by residues 145-146, Asn174, Tyr287, and Glu370; that span reads GA. Asn174 provides a ligand contact to Mg(2+).

It belongs to the transketolase family. DXPS subfamily. Homodimer. Mg(2+) serves as cofactor. It depends on thiamine diphosphate as a cofactor.

The catalysed reaction is D-glyceraldehyde 3-phosphate + pyruvate + H(+) = 1-deoxy-D-xylulose 5-phosphate + CO2. Its pathway is metabolic intermediate biosynthesis; 1-deoxy-D-xylulose 5-phosphate biosynthesis; 1-deoxy-D-xylulose 5-phosphate from D-glyceraldehyde 3-phosphate and pyruvate: step 1/1. Its function is as follows. Catalyzes the acyloin condensation reaction between C atoms 2 and 3 of pyruvate and glyceraldehyde 3-phosphate to yield 1-deoxy-D-xylulose-5-phosphate (DXP). The polypeptide is 1-deoxy-D-xylulose-5-phosphate synthase (Synechococcus sp. (strain RCC307)).